The sequence spans 95 residues: Aspartyl/glutamyl-tRNA(Asn/Gln) amidotransferase subunit C (95 aa).

The protein belongs to the GatC family. In terms of assembly, heterotrimer of A, B and C subunits.

The enzyme catalyses L-glutamyl-tRNA(Gln) + L-glutamine + ATP + H2O = L-glutaminyl-tRNA(Gln) + L-glutamate + ADP + phosphate + H(+). The catalysed reaction is L-aspartyl-tRNA(Asn) + L-glutamine + ATP + H2O = L-asparaginyl-tRNA(Asn) + L-glutamate + ADP + phosphate + 2 H(+). In terms of biological role, allows the formation of correctly charged Asn-tRNA(Asn) or Gln-tRNA(Gln) through the transamidation of misacylated Asp-tRNA(Asn) or Glu-tRNA(Gln) in organisms which lack either or both of asparaginyl-tRNA or glutaminyl-tRNA synthetases. The reaction takes place in the presence of glutamine and ATP through an activated phospho-Asp-tRNA(Asn) or phospho-Glu-tRNA(Gln). The chain is Aspartyl/glutamyl-tRNA(Asn/Gln) amidotransferase subunit C from Dinoroseobacter shibae (strain DSM 16493 / NCIMB 14021 / DFL 12).